Reading from the N-terminus, the 323-residue chain is Serine/threonine-protein phosphatase PP1-gamma catalytic subunit (323 aa).

Position 2 is an N-acetylalanine (A2). D64, H66, D92, and N124 together coordinate Mn(2+). The active-site Proton donor is the H125. The Mn(2+) site is built by H173 and H248. Residues 302 to 323 (KKPNATRPVTPPRGMITKQAKK) form a disordered region. Residues T307 and T311 each carry the phosphothreonine modification.

The protein belongs to the PPP phosphatase family. PP-1 subfamily. PP1 comprises a catalytic subunit, PPP1CA, PPP1CB or PPP1CC, which is folded into its native form by inhibitor 2 and glycogen synthetase kinase 3, and then complexed to one or several targeting or regulatory subunits. PPP1R12A, PPP1R12B and PPP1R12C mediate binding to myosin. PPP1R3A (in skeletal muscle), PPP1R3B (in sliver), PPP1R3C, PPP1R3D and PPP1R3F (in brain) mediate binding to glycogen. PPP1R15A and PPP1R15B mediate binding to EIF2S1. Part of a complex containing PPP1R15B, PP1 and NCK1/2. Interacts with PPP1R3B, PPP1R7 and CDCA2. Isoform 2 interacts with SPZ1. Interacts with IKFZ1; the interaction targets PPP1CC to pericentromeric heterochromatin, dephosphorylates IKAROS, stabilizes it and prevents it from degradation. Interacts with NOM1 and PPP1R8. Component of the PTW/PP1 phosphatase complex, composed of PPP1R10/PNUTS, TOX4, WDR82, and PPP1CA or PPP1CB or PPP1CC. Interacts with PPP1R8. Interacts with NEK2. Interacts with URI1; the interaction is phosphorylation-dependent and occurs in a growth factor-dependent manner. Interacts with FOXP3. Interacts with TMEM225 (via RVxF motif). Interacts with MKI67. Interacts with RRP1B; this targets PPP1CC to the nucleolus. Found in a complex with PPP1CA, PPP1CC, SHC1 and PEAK1. Interacts with DYNLT4. Interacts (via RVxF motif) with FIRRM; regulates PLK1 kinase activity. Interacts with the KNL1 complex subunit KNL1; the interaction is direct and mutually exclusive with KNL1 binding to microtubules. Component of the SHOC2-MRAS-PP1c (SMP) complex consisting of SHOC2, GTP-bound M-Ras/MRAS and the catalytic subunit of protein phosphatase 1 (either PPP1CA, PPP1CB or PPP1CC). SHOC2 and PP1c preferably bind M-Ras/MRAS, but they also bind K-Ras/KRAS, N-Ras/NRAS and H-Ras/HRAS; these interactions are GTP-dependent and both SHOC2 and PP1c are required to form a stable complex. Interacts with SHOC2 in the absence of Ras GTPases. Mn(2+) is required as a cofactor. Phosphorylated by NEK2. As to expression, isoform 2 is expressed only in testis, in the late spermatocytes and early spematids (at protein level).

The protein localises to the cytoplasm. The protein resides in the nucleus. It localises to the cleavage furrow. Its subcellular location is the nucleolus. It is found in the nucleoplasm. The protein localises to the chromosome. The protein resides in the centromere. It localises to the kinetochore. Its subcellular location is the nucleus speckle. It is found in the midbody. The protein localises to the mitochondrion. The protein resides in the cytoskeleton. It localises to the microtubule organizing center. The catalysed reaction is O-phospho-L-seryl-[protein] + H2O = L-seryl-[protein] + phosphate. It carries out the reaction O-phospho-L-threonyl-[protein] + H2O = L-threonyl-[protein] + phosphate. Inactivated by binding to URI1. Functionally, protein phosphatase that associates with over 200 regulatory proteins to form highly specific holoenzymes which dephosphorylate hundreds of biological targets. Protein phosphatase 1 (PP1) is essential for cell division, and participates in the regulation of glycogen metabolism, muscle contractility and protein synthesis. Dephosphorylates RPS6KB1. Involved in regulation of ionic conductances and long-term synaptic plasticity. May play an important role in dephosphorylating substrates such as the postsynaptic density-associated Ca(2+)/calmodulin dependent protein kinase II. Component of the PTW/PP1 phosphatase complex, which plays a role in the control of chromatin structure and cell cycle progression during the transition from mitosis into interphase. In balance with CSNK1D and CSNK1E, determines the circadian period length, through the regulation of the speed and rhythmicity of PER1 and PER2 phosphorylation. May dephosphorylate CSNK1D and CSNK1E. Regulates the recruitment of the SKA complex to kinetochores. Core component of the SHOC2-MRAS-PP1c (SMP) holophosphatase complex that regulates the MAPK pathway activation. Dephosphorylates MKI67 at the onset of anaphase. The SMP complex specifically dephosphorylates the inhibitory phosphorylation at 'Ser-259' of RAF1 kinase, 'Ser-365' of BRAF kinase and 'Ser-214' of ARAF kinase, stimulating their kinase activities. The SMP complex enhances the dephosphorylation activity and substrate specificity of PP1c. In terms of biological role, required for normal male fertility. This is Serine/threonine-protein phosphatase PP1-gamma catalytic subunit (Ppp1cc) from Rattus norvegicus (Rat).